The chain runs to 203 residues: ATP phosphoribosyltransferase (203 aa).

It belongs to the ATP phosphoribosyltransferase family. Short subfamily.

The protein resides in the cytoplasm. The enzyme catalyses 1-(5-phospho-beta-D-ribosyl)-ATP + diphosphate = 5-phospho-alpha-D-ribose 1-diphosphate + ATP. It functions in the pathway amino-acid biosynthesis; L-histidine biosynthesis; L-histidine from 5-phospho-alpha-D-ribose 1-diphosphate: step 1/9. In terms of biological role, catalyzes the condensation of ATP and 5-phosphoribose 1-diphosphate to form N'-(5'-phosphoribosyl)-ATP (PR-ATP). Has a crucial role in the pathway because the rate of histidine biosynthesis seems to be controlled primarily by regulation of HisG enzymatic activity. This Thermococcus kodakarensis (strain ATCC BAA-918 / JCM 12380 / KOD1) (Pyrococcus kodakaraensis (strain KOD1)) protein is ATP phosphoribosyltransferase.